The following is an 85-amino-acid chain: Toxin TdNa9 (85 aa).

A signal peptide spans 1–21 (MLKFAIAVALLLFIGLELREA). Residues 22–84 (RDGYPQSKVN…YGDPGTKPCM (63 aa)) enclose the LCN-type CS-alpha/beta domain. 4 disulfides stabilise this stretch: cysteine 33-cysteine 83, cysteine 37-cysteine 58, cysteine 43-cysteine 63, and cysteine 47-cysteine 65.

The protein belongs to the long (4 C-C) scorpion toxin superfamily. Sodium channel inhibitor family. Beta subfamily. In terms of tissue distribution, expressed by the venom gland.

The protein localises to the secreted. Alpha toxins bind voltage-independently at site-3 of sodium channels (Nav) and inhibit the inactivation of the activated channels, thereby blocking neuronal transmission. This toxin binds, in vitro, to sodium channels and inhibits the inactivation of the activated channels. Seems not toxic to mice, crickets and sweet-water shrimps. This Tityus discrepans (Venezuelan scorpion) protein is Toxin TdNa9.